Reading from the N-terminus, the 238-residue chain is MEVNEVDAREIIEMIAKSKKKTPIVAYIKGKLDGIDFSKFKFFGNDQFGVLFGEYEDFRELLEKYGEKIEDYHLEVKARNSALPLADITKYRARIEPGAIIRDMVEIGEGAVIMMGAVINVGAVIGEGTMIDMNAVVGGRAIIGKKCHIGAGAVIAGVIEPPSAKPVVIEDEVVVGANAVILEGVTVGKGSVVAAGAVVTKDVPPYTVVAGVPARVIKQIDEKTKEKTRIVDELRNLE.

It belongs to the transferase hexapeptide repeat family. DapH subfamily.

The catalysed reaction is (S)-2,3,4,5-tetrahydrodipicolinate + acetyl-CoA + H2O = L-2-acetamido-6-oxoheptanedioate + CoA. Its pathway is amino-acid biosynthesis; L-lysine biosynthesis via DAP pathway; LL-2,6-diaminopimelate from (S)-tetrahydrodipicolinate (acetylase route): step 1/3. Its function is as follows. Catalyzes the transfer of an acetyl group from acetyl-CoA to tetrahydrodipicolinate. The sequence is that of 2,3,4,5-tetrahydropyridine-2,6-dicarboxylate N-acetyltransferase from Thermotoga neapolitana (strain ATCC 49049 / DSM 4359 / NBRC 107923 / NS-E).